Consider the following 320-residue polypeptide: Malate dehydrogenase (320 aa).

Residues 10 to 15 and Asp-34 contribute to the NAD(+) site; that span reads GSGMIG. Residues Arg-83 and Arg-89 each contribute to the substrate site. Residues Asn-96 and 119 to 121 each bind NAD(+); that span reads ITN. Substrate-binding residues include Asn-121 and Arg-152. His-176 serves as the catalytic Proton acceptor.

It belongs to the LDH/MDH superfamily. MDH type 3 family.

The catalysed reaction is (S)-malate + NAD(+) = oxaloacetate + NADH + H(+). Catalyzes the reversible oxidation of malate to oxaloacetate. The sequence is that of Malate dehydrogenase from Brucella abortus (strain S19).